Consider the following 100-residue polypeptide: ATP synthase subunit c (100 aa).

Helical transmembrane passes span 27–47 and 72–92; these read SVIA…IGMG and FIAL…TLIV.

The protein belongs to the ATPase C chain family. In terms of assembly, F-type ATPases have 2 components, F(1) - the catalytic core - and F(0) - the membrane proton channel. F(1) has five subunits: alpha(3), beta(3), gamma(1), delta(1), epsilon(1). F(0) has three main subunits: a(1), b(2) and c(10-14). The alpha and beta chains form an alternating ring which encloses part of the gamma chain. F(1) is attached to F(0) by a central stalk formed by the gamma and epsilon chains, while a peripheral stalk is formed by the delta and b chains.

The protein resides in the cell inner membrane. In terms of biological role, f(1)F(0) ATP synthase produces ATP from ADP in the presence of a proton or sodium gradient. F-type ATPases consist of two structural domains, F(1) containing the extramembraneous catalytic core and F(0) containing the membrane proton channel, linked together by a central stalk and a peripheral stalk. During catalysis, ATP synthesis in the catalytic domain of F(1) is coupled via a rotary mechanism of the central stalk subunits to proton translocation. Functionally, key component of the F(0) channel; it plays a direct role in translocation across the membrane. A homomeric c-ring of between 10-14 subunits forms the central stalk rotor element with the F(1) delta and epsilon subunits. The chain is ATP synthase subunit c from Campylobacter concisus (strain 13826).